A 514-amino-acid chain; its full sequence is Maturase K (514 aa).

The protein belongs to the intron maturase 2 family. MatK subfamily.

Its subcellular location is the plastid. It localises to the chloroplast. Its function is as follows. Usually encoded in the trnK tRNA gene intron. Probably assists in splicing its own and other chloroplast group II introns. The chain is Maturase K from Acer monspessulanum (Montpellier maple).